The following is a 682-amino-acid chain: DNA ligase (682 aa).

NAD(+)-binding positions include 42-46, 91-92, and glutamate 124; these read DAEYD and SL. The active-site N6-AMP-lysine intermediate is lysine 126. NAD(+)-binding residues include arginine 147, glutamate 184, lysine 302, and lysine 326. Zn(2+) contacts are provided by cysteine 420, cysteine 423, cysteine 438, and cysteine 444. The BRCT domain maps to 603 to 682; the sequence is IADNPLKGKS…QEFIALTGEN (80 aa).

The protein belongs to the NAD-dependent DNA ligase family. LigA subfamily. Requires Mg(2+) as cofactor. The cofactor is Mn(2+).

It catalyses the reaction NAD(+) + (deoxyribonucleotide)n-3'-hydroxyl + 5'-phospho-(deoxyribonucleotide)m = (deoxyribonucleotide)n+m + AMP + beta-nicotinamide D-nucleotide.. Its function is as follows. DNA ligase that catalyzes the formation of phosphodiester linkages between 5'-phosphoryl and 3'-hydroxyl groups in double-stranded DNA using NAD as a coenzyme and as the energy source for the reaction. It is essential for DNA replication and repair of damaged DNA. This is DNA ligase from Actinobacillus pleuropneumoniae serotype 3 (strain JL03).